The following is a 387-amino-acid chain: Glutamyl-tRNA reductase 1 (387 aa).

Residues Thr-45 to Arg-48, Ser-96, Glu-101 to Asp-103, and Gln-107 each bind substrate. The Nucleophile role is filled by Cys-46. Gly-175 to Gly-180 lines the NADP(+) pocket.

This sequence belongs to the glutamyl-tRNA reductase family. In terms of assembly, homodimer.

It catalyses the reaction (S)-4-amino-5-oxopentanoate + tRNA(Glu) + NADP(+) = L-glutamyl-tRNA(Glu) + NADPH + H(+). It functions in the pathway porphyrin-containing compound metabolism; protoporphyrin-IX biosynthesis; 5-aminolevulinate from L-glutamyl-tRNA(Glu): step 1/2. Its function is as follows. Catalyzes the NADPH-dependent reduction of glutamyl-tRNA(Glu) to glutamate 1-semialdehyde (GSA). This chain is Glutamyl-tRNA reductase 1, found in Pyrobaculum arsenaticum (strain DSM 13514 / JCM 11321 / PZ6).